Consider the following 420-residue polypeptide: Histidine--tRNA ligase (420 aa).

Belongs to the class-II aminoacyl-tRNA synthetase family. As to quaternary structure, homodimer.

Its subcellular location is the cytoplasm. It catalyses the reaction tRNA(His) + L-histidine + ATP = L-histidyl-tRNA(His) + AMP + diphosphate + H(+). This chain is Histidine--tRNA ligase, found in Acholeplasma laidlawii (strain PG-8A).